The chain runs to 622 residues: Modification methylase LlaI (622 aa).

This sequence belongs to the N(4)/N(6)-methyltransferase family.

The enzyme catalyses a 2'-deoxyadenosine in DNA + S-adenosyl-L-methionine = an N(6)-methyl-2'-deoxyadenosine in DNA + S-adenosyl-L-homocysteine + H(+). Functionally, an alpha subtype methylase that modifies unknown specific adenine residues, and protects the DNA from cleavage by the LlaI endonuclease. This chain is Modification methylase LlaI, found in Lactococcus lactis subsp. lactis (Streptococcus lactis).